Reading from the N-terminus, the 131-residue chain is S-adenosylmethionine decarboxylase proenzyme (131 aa).

The active-site Schiff-base intermediate with substrate; via pyruvic acid is the serine 64. A Pyruvic acid (Ser); by autocatalysis modification is found at serine 64. Histidine 69 serves as the catalytic Proton acceptor; for processing activity. Cysteine 84 serves as the catalytic Proton donor; for catalytic activity.

Belongs to the prokaryotic AdoMetDC family. Type 1 subfamily. As to quaternary structure, heterotetramer of two alpha and two beta chains arranged as a dimer of alpha/beta heterodimers. Pyruvate is required as a cofactor. Is synthesized initially as an inactive proenzyme. Formation of the active enzyme involves a self-maturation process in which the active site pyruvoyl group is generated from an internal serine residue via an autocatalytic post-translational modification. Two non-identical subunits are generated from the proenzyme in this reaction, and the pyruvate is formed at the N-terminus of the alpha chain, which is derived from the carboxyl end of the proenzyme. The post-translation cleavage follows an unusual pathway, termed non-hydrolytic serinolysis, in which the side chain hydroxyl group of the serine supplies its oxygen atom to form the C-terminus of the beta chain, while the remainder of the serine residue undergoes an oxidative deamination to produce ammonia and the pyruvoyl group blocking the N-terminus of the alpha chain.

It carries out the reaction S-adenosyl-L-methionine + H(+) = S-adenosyl 3-(methylsulfanyl)propylamine + CO2. It functions in the pathway amine and polyamine biosynthesis; S-adenosylmethioninamine biosynthesis; S-adenosylmethioninamine from S-adenosyl-L-methionine: step 1/1. Its function is as follows. Catalyzes the decarboxylation of S-adenosylmethionine to S-adenosylmethioninamine (dcAdoMet), the propylamine donor required for the synthesis of the polyamines spermine and spermidine from the diamine putrescine. This chain is S-adenosylmethionine decarboxylase proenzyme, found in Thermoplasma acidophilum (strain ATCC 25905 / DSM 1728 / JCM 9062 / NBRC 15155 / AMRC-C165).